The chain runs to 519 residues: 2-isopropylmalate synthase (519 aa).

Residues 5-267 enclose the Pyruvate carboxyltransferase domain; sequence VIIFDTTLRD…TTNVNPMEIS (263 aa). Residues aspartate 14, histidine 202, histidine 204, and asparagine 238 each coordinate Mn(2+). The tract at residues 392-519 is regulatory domain; it reads RLESINVQSG…KEQLIHIDQV (128 aa).

Belongs to the alpha-IPM synthase/homocitrate synthase family. LeuA type 1 subfamily. Homodimer. It depends on Mn(2+) as a cofactor.

The protein resides in the cytoplasm. The enzyme catalyses 3-methyl-2-oxobutanoate + acetyl-CoA + H2O = (2S)-2-isopropylmalate + CoA + H(+). The protein operates within amino-acid biosynthesis; L-leucine biosynthesis; L-leucine from 3-methyl-2-oxobutanoate: step 1/4. In terms of biological role, catalyzes the condensation of the acetyl group of acetyl-CoA with 3-methyl-2-oxobutanoate (2-ketoisovalerate) to form 3-carboxy-3-hydroxy-4-methylpentanoate (2-isopropylmalate). The protein is 2-isopropylmalate synthase of Psychromonas ingrahamii (strain DSM 17664 / CCUG 51855 / 37).